Here is a 404-residue protein sequence, read N- to C-terminus: Cysteine desulfurase IscS (404 aa).

Residues 75-76 (AT), Asn155, Gln183, and 203-205 (SGH) contribute to the pyridoxal 5'-phosphate site. Lys206 is subject to N6-(pyridoxal phosphate)lysine. Pyridoxal 5'-phosphate is bound at residue Thr243. Residue Cys328 is the Cysteine persulfide intermediate of the active site. Cys328 provides a ligand contact to [2Fe-2S] cluster.

Belongs to the class-V pyridoxal-phosphate-dependent aminotransferase family. NifS/IscS subfamily. In terms of assembly, homodimer. Forms a heterotetramer with IscU, interacts with other sulfur acceptors. Requires pyridoxal 5'-phosphate as cofactor.

It is found in the cytoplasm. The enzyme catalyses (sulfur carrier)-H + L-cysteine = (sulfur carrier)-SH + L-alanine. The protein operates within cofactor biosynthesis; iron-sulfur cluster biosynthesis. Functionally, master enzyme that delivers sulfur to a number of partners involved in Fe-S cluster assembly, tRNA modification or cofactor biosynthesis. Catalyzes the removal of elemental sulfur atoms from cysteine to produce alanine. Functions as a sulfur delivery protein for Fe-S cluster synthesis onto IscU, an Fe-S scaffold assembly protein, as well as other S acceptor proteins. This Edwardsiella ictaluri (strain 93-146) protein is Cysteine desulfurase IscS.